A 146-amino-acid polypeptide reads, in one-letter code: Ribosome maturation factor RimP (146 aa).

This sequence belongs to the RimP family.

It localises to the cytoplasm. Required for maturation of 30S ribosomal subunits. This is Ribosome maturation factor RimP from Helicobacter pylori (strain HPAG1).